Here is a 417-residue protein sequence, read N- to C-terminus: SNF1 protein kinase subunit beta-3 (417 aa).

The segment covering Met1–Ser12 has biased composition (basic and acidic residues). Residues Met1 to Ala37 are disordered. Ser12, Ser21, Ser44, and Ser135 each carry phosphoserine. The segment covering Ala19–Ala37 has biased composition (polar residues). 2 disordered regions span residues Ser64–Lys155 and Gly250–Lys269. The span at Thr118–Leu136 shows a compositional bias: polar residues. Positions Gln137–Gln149 are enriched in low complexity. Residues Val152–Met342 are kinase-interacting sequence (KIS); required for interaction with SNF1. Over residues Leu257–Lys269 the composition is skewed to basic and acidic residues. Residues Ser276 and Ser279 each carry the phosphoserine modification. Positions Ala343 to Gln417 are association with SNF1 kinase complex (ASC) domain; required for interaction with SNF4.

Belongs to the 5'-AMP-activated protein kinase beta subunit family. As to quaternary structure, component of the SNF1 kinase complex, a heterotrimeric complex composed of the catalytic alpha subunit SNF1, one of the three related beta subunits SIP1, SIP2 or GAL83, and the regulatory gamma subunit SNF4. The beta subunit serves as a bridge between the catalytic and the regulatory subunit. Interacts (via KIS domain) with SNF1. Interacts (via ASC domain) with SNF4. Interacts with REE1. Post-translationally, phosphorylated by SNF1 in vitro.

Its subcellular location is the cytoplasm. It is found in the nucleus. Functionally, beta subunit of the SNF1 kinase complex, which is required for transcriptional, metabolic, and developmental adaptations in response to glucose limitation. Has a structural role, mediating heterotrimer formation, and a regulatory role, defining carbon source-regulated subcellular location and substrate specificity of the SNF1 kinase complex. Promotes the relocalization of the SNF1 kinase complex to the nucleus upon shift to nonfermentable carbon sources. This Saccharomyces cerevisiae (strain ATCC 204508 / S288c) (Baker's yeast) protein is SNF1 protein kinase subunit beta-3 (GAL83).